Reading from the N-terminus, the 294-residue chain is Small ribosomal subunit biogenesis GTPase RsgA (294 aa).

The CP-type G domain occupies 63–223 (KNELLRPPIA…VADTPGFSSL (161 aa)). GTP-binding positions include 112-115 (SKID) and 166-174 (GQSGVGKSS). Residues Cys-247, Cys-252, His-254, and Cys-260 each contribute to the Zn(2+) site.

This sequence belongs to the TRAFAC class YlqF/YawG GTPase family. RsgA subfamily. As to quaternary structure, monomer. Associates with 30S ribosomal subunit, binds 16S rRNA. Zn(2+) serves as cofactor.

The protein resides in the cytoplasm. One of several proteins that assist in the late maturation steps of the functional core of the 30S ribosomal subunit. Helps release RbfA from mature subunits. May play a role in the assembly of ribosomal proteins into the subunit. Circularly permuted GTPase that catalyzes slow GTP hydrolysis, GTPase activity is stimulated by the 30S ribosomal subunit. The sequence is that of Small ribosomal subunit biogenesis GTPase RsgA from Halalkalibacterium halodurans (strain ATCC BAA-125 / DSM 18197 / FERM 7344 / JCM 9153 / C-125) (Bacillus halodurans).